The primary structure comprises 2771 residues: Kinesin-like protein KIN-12D (2771 aa).

Basic and acidic residues-rich tracts occupy residues 1-13 and 40-54; these read MSKE…RDSD and KNPK…DRTP. 2 disordered regions span residues 1-73 and 117-139; these read MSKE…TPDK and YSET…GSCY. A compositionally biased stretch (polar residues) spans 118-131; sequence SETNSTQNTPTKSV. Residues 193–530 enclose the Kinesin motor domain; it reads NVQILIRVRP…LKFAQRAKLI (338 aa). Residue 274-281 coordinates ATP; the sequence is GQTGSGKT. Microtubules-binding regions lie at residues 400–404, 431–437, and 479–483; these read SSRSH, VDLAGSE, and HIPYR. Coiled coils occupy residues 1033 to 1110, 1267 to 1331, 1410 to 1505, 2108 to 2390, and 2512 to 2677; these read AATA…NEME, ELKQ…MKEK, IILL…YVEN, ELED…EQVK, and RERD…LAQE. Over residues 2727-2736 the composition is skewed to basic residues; it reads LKGKAKSRRS. Positions 2727–2771 are disordered; sequence LKGKAKSRRSRNPERKMPSMPSPRRSWSQSPRSMSQVPFFSSLDR. A compositionally biased stretch (low complexity) spans 2744-2762; the sequence is PSMPSPRRSWSQSPRSMSQ.

The protein belongs to the TRAFAC class myosin-kinesin ATPase superfamily. Kinesin family. KIN-12 subfamily. In terms of tissue distribution, expressed in tissues enriched in dividing cells, such as root meristems, root primordia, and leaf primordia/young leaves.

The protein localises to the cytoplasm. It localises to the cytoskeleton. Its subcellular location is the phragmoplast. Functionally, involved in the spatial control of cytokinesis by a proper phragmoplast guidance. This Arabidopsis thaliana (Mouse-ear cress) protein is Kinesin-like protein KIN-12D.